The chain runs to 209 residues: dITP/XTP pyrophosphatase (209 aa).

A substrate-binding site is contributed by 7–12; it reads SSHGYK. Residue aspartate 70 is the Proton acceptor of the active site. Position 70 (aspartate 70) interacts with Mg(2+). Residues serine 71, 154–157, lysine 177, and 182–183 each bind substrate; these read FGYD and HR.

This sequence belongs to the HAM1 NTPase family. Homodimer. Mg(2+) is required as a cofactor.

The enzyme catalyses XTP + H2O = XMP + diphosphate + H(+). It catalyses the reaction dITP + H2O = dIMP + diphosphate + H(+). It carries out the reaction ITP + H2O = IMP + diphosphate + H(+). Its function is as follows. Pyrophosphatase that catalyzes the hydrolysis of nucleoside triphosphates to their monophosphate derivatives, with a high preference for the non-canonical purine nucleotides XTP (xanthosine triphosphate), dITP (deoxyinosine triphosphate) and ITP. Seems to function as a house-cleaning enzyme that removes non-canonical purine nucleotides from the nucleotide pool, thus preventing their incorporation into DNA/RNA and avoiding chromosomal lesions. This is dITP/XTP pyrophosphatase from Chlamydia trachomatis serovar L2 (strain ATCC VR-902B / DSM 19102 / 434/Bu).